The primary structure comprises 273 residues: Phosphate import ATP-binding protein PstB (273 aa).

One can recognise an ABC transporter domain in the interval 26–268 (MRGEKVCVFY…PTEKRTQDYI (243 aa)). 58 to 65 (GPSGCGKS) is an ATP binding site.

The protein belongs to the ABC transporter superfamily. Phosphate importer (TC 3.A.1.7) family. The complex is composed of two ATP-binding proteins (PstB), two transmembrane proteins (PstC and PstA) and a solute-binding protein (PstS).

It localises to the cell inner membrane. It carries out the reaction phosphate(out) + ATP + H2O = ADP + 2 phosphate(in) + H(+). Part of the ABC transporter complex PstSACB involved in phosphate import. Responsible for energy coupling to the transport system. This is Phosphate import ATP-binding protein PstB from Brucella abortus (strain 2308).